The sequence spans 296 residues: MTITAAMVKELRQKTGAGMLDCKKALEETNGDIEAAATLLREKGIAKAAKKADRIAAEGLTSVVVKGNEAVLFELNSETDFVAKNKQFTDLIEELGNLFIESNVASVEEALSLKGASGKTVEEVILGATATIGEKISLRRVVRVKKTDAQGFGAYKHMGGRISVLTVLESANEELAKDLAMHITVFNPQFLSRKDVNQSTIEVETKVISEQIANDESLQGKPEKILNGILQGRLNKVLQEIVLLDQGFVKDPSITVANYLKSANNNILSYVRLEVGEGIEKKVDDFAAEVMAQVNK.

The interval 79–82 is involved in Mg(2+) ion dislocation from EF-Tu; it reads TDFV.

This sequence belongs to the EF-Ts family.

It is found in the cytoplasm. Associates with the EF-Tu.GDP complex and induces the exchange of GDP to GTP. It remains bound to the aminoacyl-tRNA.EF-Tu.GTP complex up to the GTP hydrolysis stage on the ribosome. This chain is Elongation factor Ts, found in Acholeplasma laidlawii (strain PG-8A).